A 528-amino-acid chain; its full sequence is Transcription factor cghF (528 aa).

Residues 232 to 283 (TPPNHATSSTPTSTRTPPTYHPHGPRPKSPLSSTPSPRTESTKSAAPSRDLA) form a disordered region. Low complexity predominate over residues 238–249 (TSSTPTSTRTPP). A compositionally biased stretch (polar residues) spans 261-276 (PLSSTPSPRTESTKSA).

The protein resides in the nucleus. Its function is as follows. Transcription factor that regulates the expression of the gene cluster that mediates the biosynthesis of the tetramic acid Sch210972, a potential anti-HIV fungal natural product that contains a decalin core. The chain is Transcription factor cghF from Chaetomium globosum (strain ATCC 6205 / CBS 148.51 / DSM 1962 / NBRC 6347 / NRRL 1970) (Soil fungus).